Reading from the N-terminus, the 234-residue chain is Phosphatidylcholine synthase (234 aa).

The Cytoplasmic portion of the chain corresponds to M1–N3. Residues I4–L24 form a helical membrane-spanning segment. The Periplasmic segment spans residues Y25–S26. The chain crosses the membrane as a helical span at residues I27–I47. Over I48–N75 the chain is Cytoplasmic. The helical transmembrane segment at I76–I96 threads the bilayer. The Periplasmic portion of the chain corresponds to E97 to E98. Residues K99–F116 traverse the membrane as a helical segment. The Cytoplasmic portion of the chain corresponds to S117 to N126. Residues Y127 to M147 form a helical membrane-spanning segment. At E148 to Q149 the chain is on the periplasmic side. Residues I150–I170 form a helical membrane-spanning segment. Over Y171–K180 the chain is Cytoplasmic. The chain crosses the membrane as a helical span at residues I181–L201. At S202 to K207 the chain is on the periplasmic side. Residues M208–T228 form a helical membrane-spanning segment. Residues Y229–R234 are Cytoplasmic-facing.

It belongs to the CDP-alcohol phosphatidyltransferase class-I family. Mn(2+) is required as a cofactor.

The protein resides in the cell inner membrane. It catalyses the reaction a CDP-1,2-diacyl-sn-glycerol + choline = a 1,2-diacyl-sn-glycero-3-phosphocholine + CMP + H(+). In terms of biological role, condenses choline with CDP-diglyceride to produce phosphatidylcholine and CMP. In Borreliella burgdorferi (strain ATCC 35210 / DSM 4680 / CIP 102532 / B31) (Borrelia burgdorferi), this protein is Phosphatidylcholine synthase.